The chain runs to 418 residues: Tyrosine--tRNA ligase (418 aa).

Tyr38 contributes to the L-tyrosine binding site. The 'HIGH' region motif lies at 43 to 52; that stretch reads CTAKSLHVGS. L-tyrosine contacts are provided by Tyr175 and Gln179. The 'KMSKS' region motif lies at 235 to 239; that stretch reads KMGKT. Residue Lys238 participates in ATP binding. The S4 RNA-binding domain maps to 348–413; sequence LPIIKLLQIS…CGKKRHLKIM (66 aa).

It belongs to the class-I aminoacyl-tRNA synthetase family. TyrS type 1 subfamily. As to quaternary structure, homodimer.

The protein localises to the cytoplasm. The catalysed reaction is tRNA(Tyr) + L-tyrosine + ATP = L-tyrosyl-tRNA(Tyr) + AMP + diphosphate + H(+). Its function is as follows. Catalyzes the attachment of tyrosine to tRNA(Tyr) in a two-step reaction: tyrosine is first activated by ATP to form Tyr-AMP and then transferred to the acceptor end of tRNA(Tyr). In Ehrlichia canis (strain Jake), this protein is Tyrosine--tRNA ligase.